Reading from the N-terminus, the 583-residue chain is AP-1-like transcription factor YAP1 (583 aa).

The interval 1–86 (MSTSTAKRPF…KELEDKVSQL (86 aa)) is disordered. Over residues 8 to 17 (RPFDNKRAGS) the composition is skewed to basic and acidic residues. The segment covering 24–36 (SDSGGNNSGSSPA) has biased composition (low complexity). Residues 37–46 (SKRRERKPGR) are compositionally biased toward basic residues. A Bipartite nuclear localization signal motif is present at residues 41 to 48 (ERKPGRKP). Composition is skewed to basic and acidic residues over residues 47–58 (KPLETEAKDKRT) and 67–84 (AFRE…DKVS). The bZIP domain occupies 51 to 114 (TEAKDKRTAQ…TNLLSELKRY (64 aa)). The interval 54 to 77 (KDKRTAQNRAAQRAFRERRERKMK) is basic motif. A leucine-zipper region spans residues 79–86 (LEDKVSQL). The short motif at 120-127 (KKRDSILL) is the Bipartite nuclear localization signal element. The span at 177 to 195 (SKIPSPSSDSTSPSASTSI) shows a compositional bias: low complexity. Residues 177–233 (SKIPSPSSDSTSPSASTSILDNANNKSVSSTNLNHSRSSISNSSSSPSNVNGLSSRK) form a disordered region. Residues 196 to 207 (LDNANNKSVSST) are compositionally biased toward polar residues. A compositionally biased stretch (low complexity) spans 208 to 230 (NLNHSRSSISNSSSSPSNVNGLS). The tract at residues 265 to 272 (CSKLSMAC) is n-CRD. 2 cysteine pairs are disulfide-bonded: Cys265–Cys531 and Cys272–Cys562. 2 disordered regions span residues 275–329 (KSNP…SASA) and 350–373 (QYND…VSAW). The span at 297–312 (KSNSNVNITNHNNNKI) shows a compositional bias: low complexity. A compositionally biased stretch (polar residues) spans 316 to 329 (DLSSSAPLHDSASA). Residues 531 to 562 (CSEVWDRITAHPRYSDLDIDGLCLELRTKAKC) are c-CRD. The Nuclear export signal signature appears at 547–554 (LDIDGLCL).

Belongs to the bZIP family. YAP subfamily. In terms of processing, oxidative stress induces conformational changes through oxidation of cysteine residues, masking the nuclear export signal, thus abolishing nuclear export by CRM1/exportin 1.

The protein resides in the nucleus. The protein localises to the cytoplasm. In terms of biological role, transcription activator involved in oxidative stress response and cadmium resistance. Regulates the transcription of genes encoding antioxidant enzymes and components of the cellular thiol-reducing pathways. Activity of the transcription factor is controlled through oxidation of specific cysteine residues resulting in the alteration of its subcellular location. Activation by alkyl hydroperoxides or cadmium induces nuclear accumulation and as a result YAP1 transcriptional activity. This chain is AP-1-like transcription factor YAP1 (YAP1), found in Kluyveromyces lactis (strain ATCC 8585 / CBS 2359 / DSM 70799 / NBRC 1267 / NRRL Y-1140 / WM37) (Yeast).